The sequence spans 64 residues: Large ribosomal subunit protein bL33c (64 aa).

This sequence belongs to the bacterial ribosomal protein bL33 family.

It is found in the plastid. Its subcellular location is the chloroplast. The sequence is that of Large ribosomal subunit protein bL33c from Huperzia lucidula (Shining clubmoss).